A 159-amino-acid polypeptide reads, in one-letter code: Aspartate carbamoyltransferase regulatory chain (159 aa).

Zn(2+) contacts are provided by Cys-108, Cys-113, Cys-138, and Cys-141.

Belongs to the PyrI family. As to quaternary structure, contains catalytic and regulatory chains. It depends on Zn(2+) as a cofactor.

In terms of biological role, involved in allosteric regulation of aspartate carbamoyltransferase. The polypeptide is Aspartate carbamoyltransferase regulatory chain (Thermofilum pendens (strain DSM 2475 / Hrk 5)).